The primary structure comprises 445 residues: Protein phosphatase 2C 53 (445 aa).

Residues 124–435 (LWGLESICGR…DNITVVVIDL (312 aa)) enclose the PPM-type phosphatase domain. Asp180, Gly181, Asp362, and Asp426 together coordinate Mn(2+).

This sequence belongs to the PP2C family. Interacts with PYL10, SAPK8 and SAPK10. Binding to PYL10 is dependent on the presence of abscisic acid (ABA). Interacts with PYL3, PYL5, PYL9 and PYL10. Binding to PYL9 and PYL10 is dependent on the presence of ABA. Mg(2+) is required as a cofactor. Mn(2+) serves as cofactor. As to expression, expressed in leaf blades, leaf sheaths and lamina joints. Expressed at low levels in roots, stems, flowers and panicles.

The protein resides in the cytoplasm. The protein localises to the cytosol. Its subcellular location is the nucleus. The enzyme catalyses O-phospho-L-seryl-[protein] + H2O = L-seryl-[protein] + phosphate. It catalyses the reaction O-phospho-L-threonyl-[protein] + H2O = L-threonyl-[protein] + phosphate. Repressed by abscisic acid-bound PYL1. Functionally, protein phosphatase that acts as a negative regulator of abscisic acid (ABA) signaling. Involved in the regulation of root architecture development and drought resistance. Can dephosphorylate SAPK8 and SAPK10 in vitro. Together with PYL10, SAPK8 and SAPK10, may form an ABA signaling module involved in stress response. This is Protein phosphatase 2C 53 from Oryza sativa subsp. japonica (Rice).